The following is a 97-amino-acid chain: Na(+)/H(+) antiporter subunit F1 (97 aa).

3 consecutive transmembrane segments (helical) span residues 3–23 (HNVI…AMLI), 35–55 (VVAL…FSIL), and 60–80 (YMIV…AVFS).

Belongs to the CPA3 antiporters (TC 2.A.63) subunit F family. May form a heterooligomeric complex that consists of seven subunits: mnhA1, mnhB1, mnhC1, mnhD1, mnhE1, mnhF1 and mnhG1.

Its subcellular location is the cell membrane. Mnh complex is a Na(+)/H(+) antiporter involved in Na(+) excretion. This chain is Na(+)/H(+) antiporter subunit F1 (mnhF1), found in Staphylococcus aureus (strain Mu3 / ATCC 700698).